The chain runs to 492 residues: Phosphatidylglycerol--prolipoprotein diacylglyceryl transferase (492 aa).

Transmembrane regions (helical) follow at residues 40 to 60 (IFGI…YVGW), 72 to 92 (AIRQ…VVVP), 106 to 126 (VAVR…VGLA), 133 to 153 (AGLG…GGLL), 184 to 204 (QGGL…LIAL), 214 to 234 (IGDV…LGCL), 361 to 381 (VWGT…VLLI), 409 to 429 (GVLM…LEWI), and 441 to 461 (LSIS…TLFI). R230 is an a 1,2-diacyl-sn-glycero-3-phospho-(1'-sn-glycerol) binding site.

Belongs to the Lgt family.

It is found in the cell inner membrane. It catalyses the reaction L-cysteinyl-[prolipoprotein] + a 1,2-diacyl-sn-glycero-3-phospho-(1'-sn-glycerol) = an S-1,2-diacyl-sn-glyceryl-L-cysteinyl-[prolipoprotein] + sn-glycerol 1-phosphate + H(+). It functions in the pathway protein modification; lipoprotein biosynthesis (diacylglyceryl transfer). Its function is as follows. Catalyzes the transfer of the diacylglyceryl group from phosphatidylglycerol to the sulfhydryl group of the N-terminal cysteine of a prolipoprotein, the first step in the formation of mature lipoproteins. This Rhodopirellula baltica (strain DSM 10527 / NCIMB 13988 / SH1) protein is Phosphatidylglycerol--prolipoprotein diacylglyceryl transferase.